A 150-amino-acid polypeptide reads, in one-letter code: Large ribosomal subunit protein bL9 (150 aa).

This sequence belongs to the bacterial ribosomal protein bL9 family.

Its function is as follows. Binds to the 23S rRNA. The sequence is that of Large ribosomal subunit protein bL9 from Enterococcus faecalis (strain ATCC 700802 / V583).